The sequence spans 96 residues: Cysteine proteinase (96 aa).

A disulfide bond links Cys-25 and Cys-79. Catalysis depends on residues His-31 and Asn-58.

This sequence belongs to the peptidase C1 family.

The chain is Cysteine proteinase from Carica papaya (Papaya).